We begin with the raw amino-acid sequence, 751 residues long: Protein WEAK CHLOROPLAST MOVEMENT UNDER BLUE LIGHT-like 3 (751 aa).

Ser-113 carries the phosphoserine modification. Coiled-coil stretches lie at residues 165 to 558 and 588 to 647; these read ERRK…ALQE and QALE…KARD. Composition is skewed to basic and acidic residues over residues 455–467 and 625–689; these read RERQ…KQKE and NREM…RNKE. Disordered regions lie at residues 455-479 and 625-751; these read RERQ…DKDA and NREM…HSHK. The span at 704 to 723 shows a compositional bias: low complexity; it reads GSSSNNTGGSTTTNNNNLTP.

Belongs to the WEB family.

This chain is Protein WEAK CHLOROPLAST MOVEMENT UNDER BLUE LIGHT-like 3 (WEL3), found in Arabidopsis thaliana (Mouse-ear cress).